Here is a 98-residue protein sequence, read N- to C-terminus: mRNA interferase toxin MqsR (98 aa).

Might be a dimer. Also reported to be a monomer. Crystallizes as a heterotetramer with MqsA, MqsR-MqsA(2)-MqsR. Purifies as a possible heterohexamer of 2 MqsR dimers and 1 MqsA dimer. When the 2 dissociate the MsqR mRNA interferase becomes active.

In terms of biological role, toxic component of a type II toxin-antitoxin (TA) system. Plays a significant role in the control of biofilm formation and induction of persister cells in the presence of antibiotics. An mRNA interferase which has been reported to be translation-independent. It has also been reported to be translation-dependent. Cleavage has been reported to occur on either side of G in the sequence GCU. Also reported to cleave after C in GC(A/U) sequences. There are only 14 genes in E.coli W3110 (and probably also MG1655) that do not have a GCU sequence and thus are resistant to the mRNA interferase activity; among these is the gene for toxin GhoT. Overexpression of MqsR causes cessation of cell growth and inhibits cell proliferation via inhibition of translation as well as increasing persister cell formation; these effects are overcome by concomitant or subsequent expression of antitoxin MqsA. Cross-talk can occur between different TA systems. Ectopic expression of this toxin induces transcription of the relBEF TA system operon with specific cleavage of the relBEF mRNA produced. Regulates the expression of GhoT/GhoS, a type V TA system. Persistence depends on toxin GhoT activity, which MqsR controls at the post-transcriptional level by selectively degrading the antitoxin ghoS segment of the ghoST mRNA. Overexpression leads to a dramatic increase in tolerance to the antibiotic ofloxacin. This TA system mediates cell growth during bile acid deoxycholate stress by degrading mRNA for probable deoxycholate-binding protein YgiS; bile acid detergents such as deoxycholate are important for host defense against bacterial growth in the gall bladder and duodenum. Its function is as follows. Initially reported to act as a cotranscription factor with MqsA. Following further experiments, the MqsR-MqsA complex does not bind DNA and all reported data are actually due to a small fraction of free MqsA alone binding DNA. Addition of MqsR to a preformed MqsA-promoter DNA complex causes dissociation of the MqsA-DNA complex, probably causing derepression of MqsA-repressed transcripts. Does not bind DNA in the presence or absence of MqsA. The polypeptide is mRNA interferase toxin MqsR (Escherichia coli (strain K12)).